Here is a 244-residue protein sequence, read N- to C-terminus: tRNA (guanine-N(1)-)-methyltransferase (244 aa).

S-adenosyl-L-methionine is bound by residues Gly-113 and 133 to 138 (IGDYVL).

Belongs to the RNA methyltransferase TrmD family. As to quaternary structure, homodimer.

The protein localises to the cytoplasm. The enzyme catalyses guanosine(37) in tRNA + S-adenosyl-L-methionine = N(1)-methylguanosine(37) in tRNA + S-adenosyl-L-homocysteine + H(+). Specifically methylates guanosine-37 in various tRNAs. This is tRNA (guanine-N(1)-)-methyltransferase from Bacillus cereus (strain G9842).